Consider the following 223-residue polypeptide: Protein Mis18-alpha (223 aa).

The tract at residues 1-30 (MAGTFSLEPCSTSSSCNHQGKRSESSLLEK) is disordered. Polar residues predominate over residues 9 to 18 (PCSTSSSCNH). Over residues 21-30 (KRSESSLLEK) the composition is skewed to basic and acidic residues. A phosphoserine mark is found at serine 33, serine 36, and serine 37. One can recognise a Mis18 domain in the interval 71 to 169 (PLVFLCTRCR…SVEAVESYTL (99 aa)). Cysteine 76, cysteine 79, cysteine 132, and cysteine 135 together coordinate Zn(2+). Lysine 153 is covalently cross-linked (Glycyl lysine isopeptide (Lys-Gly) (interchain with G-Cter in SUMO2)). Position 223 is a phosphoserine (serine 223).

The protein belongs to the mis18 family. Homodimer, and heterodimer with OIP5/MIS18B. Identified in a complex containing MIS18A, OIP5/MIS18B, MIS18BP1, RBBP7 and RBBP4.

It localises to the nucleus. The protein resides in the chromosome. The protein localises to the centromere. Its function is as follows. Required for recruitment of CENPA to centromeres and normal chromosome segregation during mitosis. The sequence is that of Protein Mis18-alpha (Mis18a) from Rattus norvegicus (Rat).